Reading from the N-terminus, the 116-residue chain is Nitrogenase-stabilizing/protective protein NifW (116 aa).

This sequence belongs to the NifW family. In terms of assembly, homotrimer; associates with NifD.

Functionally, may protect the nitrogenase Fe-Mo protein from oxidative damage. This Rhodopseudomonas palustris (strain TIE-1) protein is Nitrogenase-stabilizing/protective protein NifW.